Consider the following 474-residue polypeptide: Dihydrolipoyl dehydrogenase (474 aa).

Residues 34 to 42 (EKEKLGGTC), Lys51, and Gly114 each bind FAD. A disulfide bond links Cys42 and Cys47. Residues 188–192 (GGGVI), Glu211, Val245, and 278–281 (SIGR) each bind NAD(+). 2 residues coordinate FAD: Asp320 and Ala328. Catalysis depends on His453, which acts as the Proton acceptor.

The protein belongs to the class-I pyridine nucleotide-disulfide oxidoreductase family. Homodimer. The cofactor is FAD.

The protein localises to the cytoplasm. The enzyme catalyses N(6)-[(R)-dihydrolipoyl]-L-lysyl-[protein] + NAD(+) = N(6)-[(R)-lipoyl]-L-lysyl-[protein] + NADH + H(+). Its function is as follows. The branched-chain alpha-keto dehydrogenase complex catalyzes the overall conversion of alpha-keto acids to acyl-CoA and CO(2). It contains multiple copies of 3 enzymatic components: branched-chain alpha-keto acid decarboxylase (E1), lipoamide acyltransferase (E2) and lipoamide dehydrogenase (E3). This Bacillus subtilis (strain 168) protein is Dihydrolipoyl dehydrogenase (bfmBC).